The primary structure comprises 376 residues: Putative phosphoserine aminotransferase (376 aa).

Residues 1–30 (MADQLTPSLDIPAALKPRDGRFGSGPSKVR) form a disordered region. L-glutamate is bound at residue R50. Pyridoxal 5'-phosphate-binding positions include 84–85 (AT), F108, T154, D176, and Q199. K200 is subject to N6-(pyridoxal phosphate)lysine. 251-252 (NT) is a pyridoxal 5'-phosphate binding site.

It belongs to the class-V pyridoxal-phosphate-dependent aminotransferase family. SerC subfamily. In terms of assembly, homodimer. Requires pyridoxal 5'-phosphate as cofactor.

The protein resides in the cytoplasm. The enzyme catalyses O-phospho-L-serine + 2-oxoglutarate = 3-phosphooxypyruvate + L-glutamate. It carries out the reaction 4-(phosphooxy)-L-threonine + 2-oxoglutarate = (R)-3-hydroxy-2-oxo-4-phosphooxybutanoate + L-glutamate. Its pathway is amino-acid biosynthesis; L-serine biosynthesis; L-serine from 3-phospho-D-glycerate: step 2/3. The protein operates within cofactor biosynthesis; pyridoxine 5'-phosphate biosynthesis; pyridoxine 5'-phosphate from D-erythrose 4-phosphate: step 3/5. Catalyzes the reversible conversion of 3-phosphohydroxypyruvate to phosphoserine and of 3-hydroxy-2-oxo-4-phosphonooxybutanoate to phosphohydroxythreonine. The polypeptide is Putative phosphoserine aminotransferase (Mycobacterium leprae (strain TN)).